We begin with the raw amino-acid sequence, 62 residues long: Alpha-lytic protease L1 (62 aa).

The active-site Charge relay system is Ser-48.

This sequence belongs to the peptidase S1 family. In terms of assembly, monomer.

The protein resides in the secreted. The catalysed reaction is Preferential cleavage: Ala-|-Xaa, Val-|-Xaa in bacterial cell walls, elastin and other proteins.. With respect to regulation, inhibited by phenylmethanesulfonyl fluoride (PMSF) and p-chloromercuribenzoate (PCMB). In terms of biological role, has bacteriolytic activity. This chain is Alpha-lytic protease L1, found in Lysobacter sp. (strain XL1).